A 345-amino-acid chain; its full sequence is Dimethyladenosine transferase 1, mitochondrial (345 aa).

A mitochondrion-targeting transit peptide spans 1 to 27 (MAASGKLGTFRLPPLPTIREIIKLFGL). S-adenosyl-L-methionine contacts are provided by residues 35-38 (QNFL), N36, L38, G63, E85, D111, and N141.

The protein belongs to the class I-like SAM-binding methyltransferase superfamily. rRNA adenine N(6)-methyltransferase family. KsgA subfamily. As to quaternary structure, interacts with mitochondrial RNA polymerase POLRMT. Interacts with TFAM.

The protein localises to the mitochondrion. In terms of biological role, S-adenosyl-L-methionine-dependent methyltransferase which specifically dimethylates mitochondrial 12S rRNA at the conserved stem loop. Also required for basal transcription of mitochondrial DNA, probably via its interaction with POLRMT and TFAM. Stimulates transcription independently of the methyltransferase activity. The polypeptide is Dimethyladenosine transferase 1, mitochondrial (Tfb1m) (Rattus norvegicus (Rat)).